Here is a 235-residue protein sequence, read N- to C-terminus: Interleukin-34 (235 aa).

The first 20 residues, Met-1–Gly-20, serve as a signal peptide directing secretion. Residue Asn-100 is glycosylated (N-linked (GlcNAc...) asparagine).

The protein belongs to the IL-34 family. Homodimer. Interacts with CSF1R.

The protein resides in the secreted. Its function is as follows. Cytokine that promotes the proliferation, survival and differentiation of monocytes and macrophages. Promotes the release of pro-inflammatory chemokines, and thereby plays an important role in innate immunity and in inflammatory processes. Plays an important role in the regulation of osteoclast proliferation and differentiation, and in the regulation of bone resorption. Signaling via CSF1R and its downstream effectors stimulates phosphorylation of MAPK1/ERK2 AND MAPK3/ERK1. This Mus musculus (Mouse) protein is Interleukin-34 (Il34).